The following is a 74-amino-acid chain: Protein YkgV (74 aa).

The protein is Protein YkgV of Escherichia coli (strain K12).